The following is a 95-amino-acid chain: Small ribosomal subunit protein bS6 (95 aa).

The protein belongs to the bacterial ribosomal protein bS6 family.

Functionally, binds together with bS18 to 16S ribosomal RNA. The sequence is that of Small ribosomal subunit protein bS6 from Clostridium acetobutylicum (strain ATCC 824 / DSM 792 / JCM 1419 / IAM 19013 / LMG 5710 / NBRC 13948 / NRRL B-527 / VKM B-1787 / 2291 / W).